Consider the following 319-residue polypeptide: Glutathione synthetase (319 aa).

The ATP-grasp domain occupies 127–311; sequence KIFVTEFADL…VASLLWDAIE (185 aa). ATP is bound at residue 153 to 209; sequence RNEMGDIILKPLYGNGGAGVFHSARDDRNFSSLLEMFGQMFREPYIAQEYLPDVRKG. 2 residues coordinate Mg(2+): glutamate 282 and asparagine 284.

This sequence belongs to the prokaryotic GSH synthase family. The cofactor is Mg(2+). Requires Mn(2+) as cofactor.

The catalysed reaction is gamma-L-glutamyl-L-cysteine + glycine + ATP = glutathione + ADP + phosphate + H(+). Its pathway is sulfur metabolism; glutathione biosynthesis; glutathione from L-cysteine and L-glutamate: step 2/2. This chain is Glutathione synthetase, found in Agrobacterium fabrum (strain C58 / ATCC 33970) (Agrobacterium tumefaciens (strain C58)).